Consider the following 480-residue polypeptide: Siroheme synthase 2 (480 aa).

Positions 1–202 (MDYLPMFARL…QDWQSAETWL (202 aa)) are precorrin-2 dehydrogenase /sirohydrochlorin ferrochelatase. NAD(+) contacts are provided by residues 22–23 (EV) and 43–44 (PE). Residue Ser126 is modified to Phosphoserine. Residues 214–480 (GEVVLVGAGP…GCDLKLVNLA (267 aa)) form a uroporphyrinogen-III C-methyltransferase region. Position 223 (Pro223) interacts with S-adenosyl-L-methionine. The active-site Proton acceptor is the Asp246. Lys268 acts as the Proton donor in catalysis. Residues 299-301 (GGD), 329-330 (TA), Met381, and Gly410 each bind S-adenosyl-L-methionine.

This sequence in the N-terminal section; belongs to the precorrin-2 dehydrogenase / sirohydrochlorin ferrochelatase family. It in the C-terminal section; belongs to the precorrin methyltransferase family.

The catalysed reaction is uroporphyrinogen III + 2 S-adenosyl-L-methionine = precorrin-2 + 2 S-adenosyl-L-homocysteine + H(+). It catalyses the reaction precorrin-2 + NAD(+) = sirohydrochlorin + NADH + 2 H(+). It carries out the reaction siroheme + 2 H(+) = sirohydrochlorin + Fe(2+). Its pathway is cofactor biosynthesis; adenosylcobalamin biosynthesis; precorrin-2 from uroporphyrinogen III: step 1/1. It participates in cofactor biosynthesis; adenosylcobalamin biosynthesis; sirohydrochlorin from precorrin-2: step 1/1. The protein operates within porphyrin-containing compound metabolism; siroheme biosynthesis; precorrin-2 from uroporphyrinogen III: step 1/1. It functions in the pathway porphyrin-containing compound metabolism; siroheme biosynthesis; siroheme from sirohydrochlorin: step 1/1. Its pathway is porphyrin-containing compound metabolism; siroheme biosynthesis; sirohydrochlorin from precorrin-2: step 1/1. Multifunctional enzyme that catalyzes the SAM-dependent methylations of uroporphyrinogen III at position C-2 and C-7 to form precorrin-2 via precorrin-1. Then it catalyzes the NAD-dependent ring dehydrogenation of precorrin-2 to yield sirohydrochlorin. Finally, it catalyzes the ferrochelation of sirohydrochlorin to yield siroheme. The polypeptide is Siroheme synthase 2 (Aeromonas salmonicida (strain A449)).